A 474-amino-acid polypeptide reads, in one-letter code: MANAKGKVTQVIGAVVDVQFEDTLPEILNALNTENNGKKLVLEVAQHLGENTVRTIAMDATEGLVRGAEVTDTGGPITIPVGNATLGRIMNVIGEPIDEKGPVEASESRAIHQPAPEFSEQSTGSEILVTGIKVIDLLAPYSKGGKIGLFGGAGVGKTVLIMELINNIAKVHSGYSVFAGVGERTREGNDLYHEMIESNVIKPDNLSESQVALVYGQMNEPPGARARVALTGLTLAEQFRDQSGTDVLFFVDNIFRFTQAGSEVSALLGRIPSAVGYQPTLATDMGQMQERITSTKGGSITSIQAVYVPADDLTDPAPATTFAHLDATTVLSRAISELGIYPAVDPLDSSSRILDPGIVGEEHYQVARDVQGILQRYKSLQDIIAILGMDELSEEDKLTVARARKIQRFLSQPFDVAKVFTGSDGVQVPIEDTISSFKAVVAGEYDHLPEGAFYMVGGIDEVIAKAERMAADAA.

151–158 lines the ATP pocket; it reads GGAGVGKT.

It belongs to the ATPase alpha/beta chains family. As to quaternary structure, F-type ATPases have 2 components, CF(1) - the catalytic core - and CF(0) - the membrane proton channel. CF(1) has five subunits: alpha(3), beta(3), gamma(1), delta(1), epsilon(1). CF(0) has four main subunits: a(1), b(1), b'(1) and c(9-12).

Its subcellular location is the cell inner membrane. The catalysed reaction is ATP + H2O + 4 H(+)(in) = ADP + phosphate + 5 H(+)(out). Its function is as follows. Produces ATP from ADP in the presence of a proton gradient across the membrane. The catalytic sites are hosted primarily by the beta subunits. The polypeptide is ATP synthase subunit beta 2 (Dinoroseobacter shibae (strain DSM 16493 / NCIMB 14021 / DFL 12)).